The primary structure comprises 336 residues: MSRVTLSRYLIEQTRSNNTPADLRFLIEVVARACKEISHHVSKGALGGVLGSMGTENVQGEVQKKLDVISNDILLEANEWGGHLAGMASEEMDNAYQIPGKYPKGAYLLVFDPLDGSSNIDVNVSVGTIFSVLRCPNQYLSQNESLNEEAFLQPGTEQVAAGYAIYGPQTMLILTLGNGVKGFTLDRELGSFVLTHENIRVPETTAEFAINMSNQRHWEAPVQRYVGELLAGETGPLKKNYNMRWIASMVADVHRILTRGGLFMYPRDAREPSKPGKLRLMYEANPMSFIIEQAGGASTNGYDRILDIKPESLHQRVSVILGSKEEVERVTAYHKE.

Mg(2+) contacts are provided by Glu-90, Asp-112, Leu-114, and Asp-115. Residues 115 to 118, Asn-211, and Lys-277 each bind substrate; that span reads DGSS. Position 283 (Glu-283) interacts with Mg(2+).

The protein belongs to the FBPase class 1 family. As to quaternary structure, homotetramer. Mg(2+) serves as cofactor.

The protein localises to the cytoplasm. It catalyses the reaction beta-D-fructose 1,6-bisphosphate + H2O = beta-D-fructose 6-phosphate + phosphate. It participates in carbohydrate biosynthesis; gluconeogenesis. The polypeptide is Fructose-1,6-bisphosphatase class 1 (Pseudomonas putida (strain ATCC 700007 / DSM 6899 / JCM 31910 / BCRC 17059 / LMG 24140 / F1)).